We begin with the raw amino-acid sequence, 226 residues long: 7-cyano-7-deazaguanine synthase (226 aa).

9–19 (LSGGLDSTVAT) is a binding site for ATP. Zn(2+) contacts are provided by Cys-192, Cys-200, Cys-203, and Cys-206.

The protein belongs to the QueC family. Requires Zn(2+) as cofactor.

It catalyses the reaction 7-carboxy-7-deazaguanine + NH4(+) + ATP = 7-cyano-7-deazaguanine + ADP + phosphate + H2O + H(+). The protein operates within purine metabolism; 7-cyano-7-deazaguanine biosynthesis. Functionally, catalyzes the ATP-dependent conversion of 7-carboxy-7-deazaguanine (CDG) to 7-cyano-7-deazaguanine (preQ(0)). The chain is 7-cyano-7-deazaguanine synthase from Methanosphaera stadtmanae (strain ATCC 43021 / DSM 3091 / JCM 11832 / MCB-3).